A 475-amino-acid chain; its full sequence is Ankyrin repeat, SAM and basic leucine zipper domain-containing protein 1 (475 aa).

Positions 1 to 38 (MATGSLRGLAVAGGGESSDSEDDGWEIGYLDRPPQKLK) are disordered. 3 positions are modified to phosphoserine: serine 17, serine 18, and serine 20. 6 ANK repeats span residues 45–74 (EKNE…SVDS), 78–107 (YGWT…NASF), 110–144 (DKQT…DPNV), 148–177 (RLMT…EVNI), 181–210 (NGYT…NKTL), and 214–243 (DGKT…PLEG). Positions 272-334 (SYTAFGDLEI…KILAALKELE (63 aa)) constitute an SAM domain.

Interacts with DDX4, PIWIL1, RANBP9 and TDRD1.

It localises to the cytoplasm. Plays a central role during spermatogenesis by repressing transposable elements and preventing their mobilization, which is essential for the germline integrity. Acts via the piRNA metabolic process, which mediates the repression of transposable elements during meiosis by forming complexes composed of piRNAs and Piwi proteins and governs the methylation and subsequent repression of transposons. Its association with pi-bodies suggests a participation in the primary piRNAs metabolic process. Required prior to the pachytene stage to facilitate the production of multiple types of piRNAs, including those associated with repeats involved in the regulation of retrotransposons. May act by mediating protein-protein interactions during germ cell maturation. This is Ankyrin repeat, SAM and basic leucine zipper domain-containing protein 1 (ASZ1) from Oryctolagus cuniculus (Rabbit).